We begin with the raw amino-acid sequence, 282 residues long: Succinate dehydrogenase [ubiquinone] iron-sulfur subunit, mitochondrial (282 aa).

The 89-residue stretch at 43–131 (YRFNPEAPGA…STKIYPLPHM (89 aa)) folds into the 2Fe-2S ferredoxin-type domain. Residues Cys91, Cys96, Cys99, and Cys111 each contribute to the [2Fe-2S] cluster site. The 4Fe-4S ferredoxin-type domain maps to 174–204 (ERDRLDGLYECILCACCSTSCPSYWWNADKY). 3 residues coordinate [4Fe-4S] cluster: Cys184, Cys187, and Cys190. Residue Cys194 participates in [3Fe-4S] cluster binding. Trp199 is an a ubiquinone binding site. 2 residues coordinate [3Fe-4S] cluster: Cys241 and Cys247. Position 251 (Cys251) interacts with [4Fe-4S] cluster.

Belongs to the succinate dehydrogenase/fumarate reductase iron-sulfur protein family. Component of complex II composed of four subunits: a flavoprotein (FP), an iron-sulfur protein (IP), and a cytochrome b composed of a large and a small subunit. [2Fe-2S] cluster serves as cofactor. [3Fe-4S] cluster is required as a cofactor. Requires [4Fe-4S] cluster as cofactor.

The protein localises to the mitochondrion inner membrane. It catalyses the reaction a quinone + succinate = fumarate + a quinol. It participates in carbohydrate metabolism; tricarboxylic acid cycle; fumarate from succinate (eukaryal route): step 1/1. In terms of biological role, iron-sulfur protein (IP) subunit of succinate dehydrogenase (SDH) that is involved in complex II of the mitochondrial electron transport chain and is responsible for transferring electrons from succinate to ubiquinone (coenzyme Q). The polypeptide is Succinate dehydrogenase [ubiquinone] iron-sulfur subunit, mitochondrial (Caenorhabditis briggsae).